We begin with the raw amino-acid sequence, 377 residues long: Stimulator of interferon genes protein 7 (377 aa).

A run of 4 helical transmembrane segments spans residues 30–50 (TAAI…FLAV), 57–77 (THFL…GELL), 106–126 (FTFD…LILC), and 141–161 (FAIL…LVGL).

It belongs to the STING family.

The protein resides in the membrane. In terms of biological role, facilitator of innate immune signaling that acts as a sensor of second messenger signals produced by cyclic GMP-AMP synthase-like receptors (cGLRs) and promotes the production of type I interferon. Innate immune response is triggered in response to nucleotides from viruses and bacteria delivered to the cytoplasm. Acts by binding cyclic dinucleotides: recognizes and binds a large variety of 2'-3'- and 3'-3' linked cyclic dinucleotides (2'-3'-cGAMP, 3'-3'-cGAMP, 2',3'-cUAMP, 3',3'-cUAMP and/or 3',3'-c-di-GMP) second messengers produced by cGLRs in response to nucleotides in the cytosol, such as double-stranded RNA (dsRNA). Upon binding to cyclic dinucleotides, oligomerizes and promotes the recruitment and subsequent activation of the transcription factor IRF3 to induce expression of type I interferon. In Stylophora pistillata (Smooth cauliflower coral), this protein is Stimulator of interferon genes protein 7.